We begin with the raw amino-acid sequence, 257 residues long: Flap endonuclease Xni (257 aa).

Residue Asp-109 participates in Mg(2+) binding. A 5'-3' exonuclease domain is found at Leu-165 to Lys-255. K(+) contacts are provided by Leu-176, Ala-177, Ile-187, and Ile-190. The interaction with DNA stretch occupies residues Gly-189–Ala-194.

This sequence belongs to the Xni family. The cofactor is Mg(2+). K(+) serves as cofactor.

Has flap endonuclease activity. During DNA replication, flap endonucleases cleave the 5'-overhanging flap structure that is generated by displacement synthesis when DNA polymerase encounters the 5'-end of a downstream Okazaki fragment. In Aliivibrio salmonicida (strain LFI1238) (Vibrio salmonicida (strain LFI1238)), this protein is Flap endonuclease Xni.